The primary structure comprises 466 residues: MIPVKGFAGANVAVLGLGRSGLATARALRAGGAEALCWDDNPAAREAAEGEGFTIRDLRKQGVRDDTACLIVSPGIPHLYPAPNPVVAAALEAGVPVDNDIGLFFRSFAGPEWDGFDTLPRVVAVTGSNGKSTTSALIHHILSEAGRPVQLAGNIGRGVLDIEPGEEGSVVVLELSSYQTDLARALTPDVAVFTNLSPDHLDRHGGMGGYFAAKRRLFAEGGPDRAVIGVDESEGLYLAGQMSEGPGDDRVIRVSVSRKLTGPGWQVFARKGYLSEYRKGRQAGSIDLRDIRGLPGAHNHQNACAAYAACRALGLSPKAIEAGMRSYPGLPHRSQIVAEAGGVTYVNDSKATNVDAALKALGAFKRIRWICGGLQKEGGIAALNGGLAEVLKAYVIGREAAGFALQLEVESEVCTTMDEAVARAMAEAEPGDTVLLAPAAASFDQYDNFERRGEDFMAEVQKRLDG.

G127–T133 contacts ATP.

It belongs to the MurCDEF family.

It is found in the cytoplasm. It catalyses the reaction UDP-N-acetyl-alpha-D-muramoyl-L-alanine + D-glutamate + ATP = UDP-N-acetyl-alpha-D-muramoyl-L-alanyl-D-glutamate + ADP + phosphate + H(+). Its pathway is cell wall biogenesis; peptidoglycan biosynthesis. Its function is as follows. Cell wall formation. Catalyzes the addition of glutamate to the nucleotide precursor UDP-N-acetylmuramoyl-L-alanine (UMA). This chain is UDP-N-acetylmuramoylalanine--D-glutamate ligase, found in Ruegeria pomeroyi (strain ATCC 700808 / DSM 15171 / DSS-3) (Silicibacter pomeroyi).